The following is a 387-amino-acid chain: Galactokinase (387 aa).

33-36 (EHTD) serves as a coordination point for substrate. Residues S67 and 123-129 (GAGLSSS) each bind ATP. Residues S129 and E161 each contribute to the Mg(2+) site. D173 serves as the catalytic Proton acceptor. Y223 contributes to the substrate binding site.

It belongs to the GHMP kinase family. GalK subfamily.

The protein resides in the cytoplasm. It carries out the reaction alpha-D-galactose + ATP = alpha-D-galactose 1-phosphate + ADP + H(+). It functions in the pathway carbohydrate metabolism; galactose metabolism. Functionally, catalyzes the transfer of the gamma-phosphate of ATP to D-galactose to form alpha-D-galactose-1-phosphate (Gal-1-P). The chain is Galactokinase from Lacticaseibacillus casei (Lactobacillus casei).